Consider the following 59-residue polypeptide: Large ribosomal subunit protein uL30 (59 aa).

The protein belongs to the universal ribosomal protein uL30 family. In terms of assembly, part of the 50S ribosomal subunit.

This Rhodococcus erythropolis (strain PR4 / NBRC 100887) protein is Large ribosomal subunit protein uL30.